A 284-amino-acid chain; its full sequence is Tropomyosin alpha-1 chain (284 aa).

Residue Met-1 is modified to N-acetylmethionine. The interval 1-38 (MDAIKKKMQMLKLDKENALDRAEQAEADKKAAEDRSKQ) is disordered. A coiled-coil region spans residues 1-284 (MDAIKKKMQM…DHALNDMTSI (284 aa)). Positions 12-38 (KLDKENALDRAEQAEADKKAAEDRSKQ) are enriched in basic and acidic residues. Phosphoserine is present on Ser-45. The tract at residues 116 to 136 (AEKAADESERGMKVIESRAQK) is disordered. Phosphoserine is present on residues Ser-174, Ser-186, Ser-206, and Ser-252. Phosphotyrosine is present on Tyr-261. Phosphoserine is present on residues Ser-271 and Ser-283.

The protein belongs to the tropomyosin family. As to quaternary structure, homodimer. Heterodimer of an alpha (TPM1, TPM3 or TPM4) and a beta (TPM2) chain. Interacts with HRG (via the HRR domain); the interaction contributes to the antiangiogenic properties of the histidine/proline-rich region (HRR) of HRG. Interacts (via N-terminus) with LMOD2 (via N-terminus) and TMOD1 (via N-terminus). Post-translationally, phosphorylated at Ser-283 by DAPK1 in response to oxidative stress and this phosphorylation enhances stress fiber formation in endothelial cells.

The protein localises to the cytoplasm. Its subcellular location is the cytoskeleton. Binds to actin filaments in muscle and non-muscle cells. Plays a central role, in association with the troponin complex, in the calcium dependent regulation of vertebrate striated muscle contraction. Smooth muscle contraction is regulated by interaction with caldesmon. In non-muscle cells is implicated in stabilizing cytoskeleton actin filaments. This Mus musculus (Mouse) protein is Tropomyosin alpha-1 chain (Tpm1).